The primary structure comprises 120 residues: uncharacterized protein (120 aa).

This sequence to B.subtilis XkdH.

This is an uncharacterized protein from Bacillus subtilis (strain 168).